We begin with the raw amino-acid sequence, 243 residues long: uncharacterized protein (243 aa).

Positions 1–19 are cleaved as a signal peptide; it reads MKSLPLLGILAFAANRLSA. 2 N-linked (GlcNAc...) asparagine glycosylation sites follow: Asn-112 and Asn-206.

This is an uncharacterized protein from Encephalitozoon cuniculi (strain GB-M1) (Microsporidian parasite).